The following is a 439-amino-acid chain: Probable aspartic-type endopeptidase AFUA_3G01220 (439 aa).

A signal peptide spans 1–20 (MHFSIGSLFLYLIASASCTA). The tract at residues 31–50 (RTPFTTSTSKPSAFTNPSTD) is disordered. The segment covering 32 to 45 (TPFTTSTSKPSAFT) has biased composition (low complexity). The 342-residue stretch at 95 to 436 (FATSINIGNQ…DVGAAEMRFA (342 aa)) folds into the Peptidase A1 domain. N-linked (GlcNAc...) asparagine glycosylation is present at asparagine 103. Aspartate 111 is an active-site residue. 7 N-linked (GlcNAc...) asparagine glycosylation sites follow: asparagine 149, asparagine 178, asparagine 187, asparagine 253, asparagine 256, asparagine 276, and asparagine 308. Residue aspartate 323 is part of the active site. Asparagine 361 and asparagine 394 each carry an N-linked (GlcNAc...) asparagine glycan.

This sequence belongs to the peptidase A1 family.

The protein resides in the secreted. In terms of biological role, probable aspartic-type endopeptidase which contributes to virulence. The chain is Probable aspartic-type endopeptidase AFUA_3G01220 from Aspergillus fumigatus (strain ATCC MYA-4609 / CBS 101355 / FGSC A1100 / Af293) (Neosartorya fumigata).